Reading from the N-terminus, the 350-residue chain is MGKGGALSDGVIKKILLSYTYVAIWIFLSFTVIVYNKYILDKKMYNWPFPITLTMIHMAFCSSLAVILIKVFKIVEPVSMSRDTYIRSVVPIGALYSLSLWLSNSAYIYLSVSFIQMLKALMPVAVYSIGVLLKKESFKSETMTNMLSISFGVAIAAYGEAKFDTWGVMLQLGAVAFEATRLVLIQILLTSKGINLNPITSLYYVAPCCLVFLFFPWIFVELPILRETSSFHFDFVIFGTNSVCAFALNLAVFLLVGKTSALTMNVAGVVKDWLLIAFSWSVIKDTVTPLNLFGYGLAFLGVAYYNHCKLQALKAKDAQKKVQQGDEEEAGKLLEERESEAAAKRNETED.

10 helical membrane-spanning segments follow: residues Ile-15–Tyr-35, Phe-49–Ile-69, Val-89–Tyr-109, Val-112–Leu-132, Met-146–Trp-166, Val-168–Leu-188, Val-205–Leu-225, Phe-235–Leu-255, Thr-263–Ile-283, and Thr-286–Asn-306. One can recognise an EamA domain in the interval Tyr-38 to Ile-155. The tract at residues Gln-324 to Asp-350 is disordered.

This sequence belongs to the TPT transporter family. TPT (TC 2.A.7.9) subfamily.

The protein localises to the membrane. The polypeptide is Probable sugar phosphate/phosphate translocator At4g32390 (Arabidopsis thaliana (Mouse-ear cress)).